A 550-amino-acid chain; its full sequence is Glucose-6-phosphate isomerase 1 (550 aa).

Catalysis depends on Glu358, which acts as the Proton donor. Residues His389 and Lys513 contribute to the active site.

It belongs to the GPI family.

The protein localises to the cytoplasm. The enzyme catalyses alpha-D-glucose 6-phosphate = beta-D-fructose 6-phosphate. It participates in carbohydrate biosynthesis; gluconeogenesis. Its pathway is carbohydrate degradation; glycolysis; D-glyceraldehyde 3-phosphate and glycerone phosphate from D-glucose: step 2/4. In terms of biological role, catalyzes the reversible isomerization of glucose-6-phosphate to fructose-6-phosphate. In Streptomyces coelicolor (strain ATCC BAA-471 / A3(2) / M145), this protein is Glucose-6-phosphate isomerase 1.